The chain runs to 1150 residues: BAI1-associated protein 3 (1150 aa).

Positions 22–44 (RRKTEQEPEVTNSQEPPTGAWKP) are disordered. A C2 1 domain is found at 139-298 (SSEEHMEAIM…VKSARANGTA (160 aa)). Ca(2+) is bound by residues aspartate 174 and aspartate 180. The segment at 193–214 (APQEPSGQKEQRFGFRKGSKRS) is disordered. 2 residues coordinate Ca(2+): aspartate 258 and aspartate 260. Positions 626–747 (FELYLTLADT…EASLFYTELL (122 aa)) constitute an MHD1 domain. The 109-residue stretch at 851-959 (DEAVAPLLKY…CSTRECIEQF (109 aa)) folds into the MHD2 domain. The C2 2 domain maps to 973-1099 (RFGRLTVRCH…GIARPHVGGG (127 aa)). The Ca(2+) site is built by leucine 1003, aspartate 1004, aspartate 1010, aspartate 1068, aspartate 1070, serine 1073, and aspartate 1076.

Belongs to the unc-13 family. As to quaternary structure, interacts with ADGRB1, this interaction is direct. Interacts with endosomal SNARE proteins VAMP3, VAMP4, STX6 and STX16; this interaction is increased in the presence of calcium. It depends on Ca(2+) as a cofactor. As to expression, prominently expressed in brain structures including hypothalamus, amygdala, stria terminalis and periaqueductal gray (at protein level). Expressed in nonneuronal tissues, including placenta, lung, pancreas, spleen, and testes. Within placenta, expression is restricted to the syncytiotrophoblasts.

The protein resides in the cytoplasm. The protein localises to the cytosol. It localises to the recycling endosome membrane. It is found in the late endosome membrane. Its subcellular location is the golgi apparatus. The protein resides in the trans-Golgi network membrane. The protein localises to the cell membrane. Functionally, functions in endosome to Golgi retrograde transport. In response to calcium influx, may interact with SNARE fusion receptors and membrane phospholipids to mediate endosome fusion with the trans-Golgi network. By promoting the recycling of secretory vesicle transmembrane proteins, it indirectly controls dense-core secretory vesicle biogenesis, maturation and their ability to mediate the constitutive and regulated secretion of neurotransmitters and hormones. May regulate behavior and food intake by controlling calcium-stimulated exocytosis of neurotransmitters including NPY and serotonin and hormones like insulin. Proposed to play a role in hypothalamic neuronal firing by modulating gamma-aminobutyric acid (GABA)ergic inhibitory neurotransmission. In Mus musculus (Mouse), this protein is BAI1-associated protein 3.